The chain runs to 542 residues: Major facilitator superfamily domain-containing protein 6-like (542 aa).

11 helical membrane passes run 46-66 (LGLS…LALL), 89-109 (LLSS…GILV), 198-218 (MFFL…PLEW), 246-266 (VGAA…FCRI), 272-292 (FYSY…LPIY), 321-341 (VTVI…LWLM), 352-372 (GICL…AGPL), 381-401 (WMLV…SFLW), 404-424 (WAVM…WWSV), 444-464 (FEAF…GFVV), and 469-489 (VNVL…ALAV).

The protein belongs to the major facilitator superfamily. MFSD6 family.

The protein localises to the membrane. This chain is Major facilitator superfamily domain-containing protein 6-like (mfsd6l), found in Danio rerio (Zebrafish).